The chain runs to 221 residues: MAAPVCVNIQMLLEAAEYLERREREAEHGYASMLPYNSKERDGLKRKSKSKKSSSSRSTHNEMEKNRRAHLRLCLEKLKMLVPLGPESNRHTTLSLLMRAKLHIKKLEDCDKRSVHQIEQLQREQRHLTRQLEKFGVERTRMDSIGSAMSSERSDSDREEIDVDVESTDYLTAELDWSSSSSSVSDLDERESMQSICSDEGYSSSGLKSIGLQNNPKSIAL.

Residues 21–49 (RREREAEHGYASMLPYNSKERDGLKRKSK) carry the Nuclear localization signal motif. Disordered regions lie at residues 29–67 (GYAS…EKNR) and 178–221 (SSSS…SIAL). The 53-residue stretch at 55-107 (SSRSTHNEMEKNRRAHLRLCLEKLKMLVPLGPESNRHTTLSLLMRAKLHIKKL) folds into the bHLH domain. The segment covering 193–221 (MQSICSDEGYSSSGLKSIGLQNNPKSIAL) has biased composition (polar residues).

As to quaternary structure, heterodimer with MAX; the interaction is required for DNA-binding. DNA binding requires dimerization with another bHLH protein; does not form homodimers, and does not bind to DNA in the absence of MAX in vitro. As to expression, expressed primarily in cells that have undergone terminal differentiation including notochord, floor plate and cement gland.

It is found in the nucleus. Its function is as follows. Component of a transcriptional repressor complex together with MAX. In complex with MAX binds to the core DNA sequence 5'-CAC[GA]TG-3'. Antagonizes MYC transcriptional activity by competing with MYC for MAX binding. Binds to the TERT promoter and represses telomerase expression, possibly by interfering with MYC binding. The polypeptide is Max dimerization protein 1 (mxd1) (Xenopus laevis (African clawed frog)).